The following is a 151-amino-acid chain: Superoxide dismutase [Cu-Zn] (151 aa).

Cys6 is lipidated: S-palmitoyl cysteine. Cu cation contacts are provided by His45, His47, and His62. A disulfide bridge connects residues Cys56 and Cys144. Zn(2+) contacts are provided by His62, His70, His79, and Asp82. Cu cation is bound at residue His118.

Belongs to the Cu-Zn superoxide dismutase family. Homodimer. It depends on Cu cation as a cofactor. Requires Zn(2+) as cofactor.

Its subcellular location is the cytoplasm. It is found in the nucleus. It catalyses the reaction 2 superoxide + 2 H(+) = H2O2 + O2. Functionally, destroys radicals which are normally produced within the cells and which are toxic to biological systems. This chain is Superoxide dismutase [Cu-Zn] (sod1), found in Xenopus tropicalis (Western clawed frog).